Reading from the N-terminus, the 53-residue chain is uncharacterized protein (53 aa).

This is an uncharacterized protein from Dictyostelium discoideum (Social amoeba).